The primary structure comprises 424 residues: Gamma-glutamyl phosphate reductase (424 aa).

Belongs to the gamma-glutamyl phosphate reductase family.

The protein resides in the cytoplasm. The catalysed reaction is L-glutamate 5-semialdehyde + phosphate + NADP(+) = L-glutamyl 5-phosphate + NADPH + H(+). The protein operates within amino-acid biosynthesis; L-proline biosynthesis; L-glutamate 5-semialdehyde from L-glutamate: step 2/2. Catalyzes the NADPH-dependent reduction of L-glutamate 5-phosphate into L-glutamate 5-semialdehyde and phosphate. The product spontaneously undergoes cyclization to form 1-pyrroline-5-carboxylate. The protein is Gamma-glutamyl phosphate reductase of Dehalococcoides mccartyi (strain ATCC BAA-2100 / JCM 16839 / KCTC 5957 / BAV1).